Consider the following 212-residue polypeptide: Thymidylate kinase (212 aa).

Residue 11 to 18 (GPEGAGKS) coordinates ATP.

Belongs to the thymidylate kinase family.

It carries out the reaction dTMP + ATP = dTDP + ADP. Its function is as follows. Phosphorylation of dTMP to form dTDP in both de novo and salvage pathways of dTTP synthesis. This chain is Thymidylate kinase, found in Streptococcus sanguinis (strain SK36).